Consider the following 246-residue polypeptide: Auxin-responsive protein IAA25 (246 aa).

A disordered region spans residues 1 to 22 (MKSSSVAPRLKQERQDDCKFQE). Residues 10 to 22 (LKQERQDDCKFQE) are compositionally biased toward basic and acidic residues. Positions 28-32 (LELRL) match the EAR-like (transcriptional repression) motif. The region spanning 143–238 (TMFVKVNLEG…SVKRLYIAQD (96 aa)) is the PB1 domain.

Belongs to the Aux/IAA family. As to quaternary structure, homodimers and heterodimers. Highly expressed in flowers. Expressed in roots and seedlings.

Its subcellular location is the nucleus. Functionally, aux/IAA proteins are short-lived transcriptional factors that function as repressors of early auxin response genes at low auxin concentrations. The sequence is that of Auxin-responsive protein IAA25 (IAA25) from Oryza sativa subsp. japonica (Rice).